We begin with the raw amino-acid sequence, 466 residues long: Cysteine--tRNA ligase (466 aa).

Residue Cys29 coordinates Zn(2+). Positions 31–41 match the 'HIGH' region motif; the sequence is PTVYNYIHIGN. Zn(2+)-binding residues include Cys209, His234, and Glu238. Residues 266-270 carry the 'KMSKS' region motif; it reads KMSKS. Lys269 provides a ligand contact to ATP. Ser270 is modified (phosphoserine).

The protein belongs to the class-I aminoacyl-tRNA synthetase family. In terms of assembly, monomer. Zn(2+) serves as cofactor.

The protein resides in the cytoplasm. It catalyses the reaction tRNA(Cys) + L-cysteine + ATP = L-cysteinyl-tRNA(Cys) + AMP + diphosphate. The sequence is that of Cysteine--tRNA ligase from Bacillus velezensis (strain DSM 23117 / BGSC 10A6 / LMG 26770 / FZB42) (Bacillus amyloliquefaciens subsp. plantarum).